Consider the following 106-residue polypeptide: Putative toxin Rv3098A/RVBD_3098A (106 aa).

It belongs to the PemK/MazF family. As to quaternary structure, forms a complex with cognate antitoxin Rv3098B/RVBD_3098B.

Functionally, putative toxic component of a possible type II toxin-antitoxin (TA) system. Its toxic effect may be neutralized by cognate antitoxin Rv3098B/RVBD_3098B. In Mycobacterium tuberculosis (strain ATCC 25618 / H37Rv), this protein is Putative toxin Rv3098A/RVBD_3098A.